Consider the following 274-residue polypeptide: MSQSTLVIIGAGGIGEAIARRVGPGKEVLLGDWSNALLQEATQRMKRDGFRVTSQHVNISSHDSVIQFAEKAQSLGQVMHVVISAGLSPVSSTRETILAVNLAGTGFCIAEFGKLIGHGGTCVVISSLAGYTLAQDVPHGVIQHLARTSPSDVLGLPLLRETVLDQWSAYGVSKRVNYVQVQDASLSWARRGARINSISPGAIQTPMLSLESQASKEEVVHDLAQNVPCKRVGDSGEVAHVAAFLLGSESSFVTGTDILVDGGALAYLSRDTSS.

5 residues coordinate NADP(+): Ile-14, Tyr-170, Lys-174, Ile-203, and Thr-205. The active-site Proton donor is the Tyr-170. The active-site Lowers pKa of active site Tyr is the Lys-174.

It belongs to the short-chain dehydrogenases/reductases (SDR) family.

Its pathway is mycotoxin biosynthesis. Short-chain dehydrogenase/reductase; part of the gene cluster that mediates the biosynthesis of the diterpene glucoside brassicicene C. In the first step of the brassicicene C biosynthesis, the bifunctional diterpene synthase bsc8 that possesses both prenyl transferase and terpene cyclase activity, converts isopentenyl diphosphate and dimethylallyl diphosphate into geranylgeranyl diphosphate (GGDP) that is further converted into fusicocca-2,10(14)-diene, the first precursor for brassicicene C. Fusicocca-2,10(14)-diene is then substrate of cytochrome P450 monooxygenase bsc1 for hydroxylation at the C-8 position. Oxidation at C-16 position to aldehyde is then catalyzed by the cytochrome P450 monooyxygenase bsc7, yielding fusicocca-2,10(14)-diene-8-beta,16-diol. Follows the isomerization of the double bond and reduction of aldehyde to alcohol catalyzed by the short-chain dehydrogenase/reductase bsc3 to yield the diol compound fusicocca-1,10(14)-diene-8 beta,16-diol. The next step is the oxidation at the C-3 position of fusicocca-2,10(14)-diene-8-beta,16-diol catalyzed by the alpha-ketoglutarate dependent dioxygenase bsc9, to produce a triol compound. Methylation of the hydroxy group at position 16 is performed by the methyltransferase bsc6. 16-O-methylation is followed by oxidation at the C-13 position to ketone and an alkyl shift of the methyl group leads to brassicicene C. Although the probable acetyltransferase bsc4 is included in the gene cluster, no acetylation reactions are necessary for brassicicene C biosynthesis. However, the fact that brassicicene E, which is a structurally related compound having an acetoxy group at position 12, was previously isolated from another strain of A.brassicicola suggests that the ATCC 96836 strain might also produce a small amount of brassicicene E. This chain is Short-chain dehydrogenase/reductase bsc3, found in Alternaria brassicicola (Dark leaf spot agent).